Reading from the N-terminus, the 505-residue chain is Histidine ammonia-lyase (505 aa).

The segment at residues 141–143 (ASG) is a cross-link (5-imidazolinone (Ala-Gly)). The residue at position 142 (serine 142) is a 2,3-didehydroalanine (Ser).

The protein belongs to the PAL/histidase family. In terms of processing, contains an active site 4-methylidene-imidazol-5-one (MIO), which is formed autocatalytically by cyclization and dehydration of residues Ala-Ser-Gly.

The protein localises to the cytoplasm. The catalysed reaction is L-histidine = trans-urocanate + NH4(+). It functions in the pathway amino-acid degradation; L-histidine degradation into L-glutamate; N-formimidoyl-L-glutamate from L-histidine: step 1/3. The protein is Histidine ammonia-lyase of Bacillus anthracis.